We begin with the raw amino-acid sequence, 327 residues long: GPI-linked NAD(P)(+)--arginine ADP-ribosyltransferase 1 (327 aa).

The signal sequence occupies residues 1-22 (MWVPAVANLLLLSLGLLEAIQA). 2 disulfide bridges follow: Cys-53–Cys-277 and Cys-174–Cys-224. Asn-65 is a glycosylation site (N-linked (GlcNAc...) asparagine). The region spanning 73-273 (KVYADGWALA…IYLKALGKRS (201 aa)) is the TR mART core domain. Residues Tyr-121 and Arg-179 each contribute to the NAD(+) site. Active-site residues include Arg-179 and Ser-202. An NAD(+)-binding site is contributed by Ser-233. Glu-240 is a catalytic residue. Asn-253 carries N-linked (GlcNAc...) asparagine glycosylation. Ser-295 is lipidated: GPI-anchor amidated serine. Positions 296–327 (ASAQERLSTAWSLLLLLAFLAVGPFPGSPGLF) are cleaved as a propeptide — removed in mature form.

The protein belongs to the Arg-specific ADP-ribosyltransferase family. As to expression, primarily in skeletal and cardiac muscle.

The protein localises to the sarcoplasmic reticulum membrane. It catalyses the reaction L-arginyl-[protein] + NAD(+) = N(omega)-(ADP-D-ribosyl)-L-arginyl-[protein] + nicotinamide + H(+). Functionally, has ADP-ribosyltransferase activity toward GLP1R. This chain is GPI-linked NAD(P)(+)--arginine ADP-ribosyltransferase 1 (ART1), found in Oryctolagus cuniculus (Rabbit).